The chain runs to 281 residues: Putative dehydrogenase/reductase SDR family member 4-like 1 (281 aa).

Residue 36 to 60 participates in NADP(+) binding; that stretch reads LVTASTDWIGFAVAQRLAQDGAHVV. S172 serves as a coordination point for substrate. Catalysis depends on Y185, which acts as the Proton acceptor. K189 lines the NADP(+) pocket. The short motif at 279 to 281 is the Peroxisomal targeting signal element; the sequence is SRL.

Belongs to the short-chain dehydrogenases/reductases (SDR) family.

Putative oxidoreductase. This is Putative dehydrogenase/reductase SDR family member 4-like 1 from Homo sapiens (Human).